Here is a 131-residue protein sequence, read N- to C-terminus: Small ribosomal subunit protein eS17A (131 aa).

It belongs to the eukaryotic ribosomal protein eS17 family. In terms of assembly, component of the small ribosomal subunit (SSU). Mature yeast ribosomes consist of a small (40S) and a large (60S) subunit. The 40S small subunit contains 1 molecule of ribosomal RNA (18S rRNA) and at least 33 different proteins. The large 60S subunit contains 3 rRNA molecules (25S, 5.8S and 5S rRNA) and at least 46 different proteins.

The protein localises to the cytoplasm. Component of the ribosome, a large ribonucleoprotein complex responsible for the synthesis of proteins in the cell. The small ribosomal subunit (SSU) binds messenger RNAs (mRNAs) and translates the encoded message by selecting cognate aminoacyl-transfer RNA (tRNA) molecules. The large subunit (LSU) contains the ribosomal catalytic site termed the peptidyl transferase center (PTC), which catalyzes the formation of peptide bonds, thereby polymerizing the amino acids delivered by tRNAs into a polypeptide chain. The nascent polypeptides leave the ribosome through a tunnel in the LSU and interact with protein factors that function in enzymatic processing, targeting, and the membrane insertion of nascent chains at the exit of the ribosomal tunnel. The polypeptide is Small ribosomal subunit protein eS17A (rps1701) (Schizosaccharomyces pombe (strain 972 / ATCC 24843) (Fission yeast)).